Here is a 666-residue protein sequence, read N- to C-terminus: ATP synthase subunit alpha 2 (666 aa).

Residue 182–189 (GDRATGKT) coordinates ATP. A disordered region spans residues 527 to 666 (MPAEDAAGDI…DAEAEARHKR (140 aa)). Residues 545 to 590 (ARGDADRDADHGANREVSREVSPEASREVSREVSCEVSHEADRDAA) are compositionally biased toward basic and acidic residues. Low complexity predominate over residues 591-601 (ADAARVAGRAP). Over residues 623 to 641 (ADGDRASASRPRPDARGDA) the composition is skewed to basic and acidic residues.

It belongs to the ATPase alpha/beta chains family. In terms of assembly, F-type ATPases have 2 components, CF(1) - the catalytic core - and CF(0) - the membrane proton channel. CF(1) has five subunits: alpha(3), beta(3), gamma(1), delta(1), epsilon(1). CF(0) has three main subunits: a(1), b(2) and c(9-12). The alpha and beta chains form an alternating ring which encloses part of the gamma chain. CF(1) is attached to CF(0) by a central stalk formed by the gamma and epsilon chains, while a peripheral stalk is formed by the delta and b chains.

It localises to the cell inner membrane. It catalyses the reaction ATP + H2O + 4 H(+)(in) = ADP + phosphate + 5 H(+)(out). In terms of biological role, produces ATP from ADP in the presence of a proton gradient across the membrane. The alpha chain is a regulatory subunit. The sequence is that of ATP synthase subunit alpha 2 from Burkholderia pseudomallei (strain 1106a).